The sequence spans 448 residues: tRNA wybutosine-synthesizing protein 2 homolog (448 aa).

S-adenosyl-L-methionine contacts are provided by residues S218, K225, E265, and 293 to 294; that span reads DN.

The protein belongs to the class I-like SAM-binding methyltransferase superfamily. TRM5/TYW2 family.

It catalyses the reaction 4-demethylwyosine(37) in tRNA(Phe) + S-adenosyl-L-methionine = 4-demethyl-7-[(3S)-3-amino-3-carboxypropyl]wyosine(37) in tRNA(Phe) + S-methyl-5'-thioadenosine + H(+). It functions in the pathway tRNA modification; wybutosine-tRNA(Phe) biosynthesis. In terms of biological role, S-adenosyl-L-methionine-dependent transferase that acts as a component of the wybutosine biosynthesis pathway. Wybutosine is a hyper modified guanosine with a tricyclic base found at the 3'-position adjacent to the anticodon of eukaryotic phenylalanine tRNA. Catalyzes the transfer of the alpha-amino-alpha-carboxypropyl (acp) group from S-adenosyl-L-methionine to the C-7 position of 4-demethylwyosine (imG-14) to produce wybutosine-86. This Homo sapiens (Human) protein is tRNA wybutosine-synthesizing protein 2 homolog (TRMT12).